The primary structure comprises 67 residues: CAMPATH-1 antigen (67 aa).

The N-terminal stretch at 1-25 (MKGFLFLLLTISLLVMIQIQTGVLG) is a signal peptide. N-linked (GlcNAc...) asparagine glycosylation occurs at Asn-26. Ser-45 carries GPI-anchor amidated serine lipidation. Residues 46 to 67 (SLGGGSVLLFLANTLIQLFYLS) constitute a propeptide, removed in mature form.

In terms of tissue distribution, epididymis. Highest levels are found in the distal corpus and cauda. Little or no expression in the caput and proximal cauda regions.

The protein resides in the cell membrane. May play a role in carrying and orienting carbohydrate, as well as having a more specific role. The chain is CAMPATH-1 antigen (CD52) from Canis lupus familiaris (Dog).